We begin with the raw amino-acid sequence, 530 residues long: Calcium uptake protein 3, mitochondrial (530 aa).

A mitochondrion-targeting transit peptide spans 1-43 (MAALRRLLWPPPRVSPPLCAHQPLLGPWGRPAVTTLGLPGRPF). Residues 92–115 (GSPATGRPSKSAATEPEDPPRGRG) are disordered. Residues 232-267 (KPHAGFRIAFNMFDTDGNEMVDKKEFLVLQEIFRKK) form the EF-hand 1 domain. Ca(2+) contacts are provided by D245, D247, N249, M251, D253, and E256. The EF-hand 2; degenerate domain occupies 401–436 (VENTSVFLENVRYSIPEEKGITFDEFRSFFQFLNNL). The region spanning 470–505 (FSPHLVNTVFKIFDVDKDDQLSYKEFIGIMKDRLHR) is the EF-hand 3 domain. Ca(2+)-binding residues include D483, D485, D487, Q489, and E494.

It belongs to the MICU1 family. MICU3 subfamily. Heterodimer; disulfide-linked; heterodimerizes with MICU1. Component of the uniplex complex, composed of MCU, EMRE/SMDT1, MICU1 and MICU3 in a 4:4:1:1 stoichiometry. As to expression, specifically expressed in the central nervous system and skeletal muscle.

The protein resides in the mitochondrion intermembrane space. Its subcellular location is the mitochondrion inner membrane. Functionally, tissue-specific calcium sensor of the mitochondrial calcium uniporter (MCU) channel, which specifically regulates MCU channel activity in the central nervous system and skeletal muscle. Senses calcium level via its EF-hand domains: compared to MICU1 and MICU2, MICU3 has a higher affinity for calcium. MICU1 and MICU3 form a disulfide-linked heterodimer that stimulates and inhibits MCU activity, depending on the concentration of calcium. At low calcium levels, MICU1 occludes the pore of the MCU channel, preventing mitochondrial calcium uptake. At higher calcium levels, calcium-binding to MICU1 and MICU3 induces a conformational change that weakens MCU-MICU1 interactions and moves the MICU1-MICU3 heterodimer away from the pore, allowing calcium permeation through the MCU channel. The high calcium affinity of MICU3 lowers the calcium threshold necessary for calcium permeation through the MCU channel. The MICU1-MICU3 heterodimer promotes flexibility of neurotransmission in neuronal cells by enhancing mitochondrial calcium uptake in presynapses. It is also required to increase mitochondrial calcium uptake in skeletal muscle cells, thereby increasing ATP production. The polypeptide is Calcium uptake protein 3, mitochondrial (Homo sapiens (Human)).